The primary structure comprises 172 residues: Transcriptional regulator CdrL (172 aa).

The interval 72–113 (SPSAVEEVRTTPASGGRADAEEPGDDGETDAEHADTSATGDE) is disordered. The DZANK-type zinc finger occupies 116–160 (CSQCGAELSADHVYCPNCGGKATHRVFCECGDEIRADWAFCPRCG).

This sequence belongs to the CdrL family.

It is found in the cytoplasm. Its function is as follows. Transcriptional regulator involved in the control of cell division. The chain is Transcriptional regulator CdrL from Halobacterium salinarum (strain ATCC 29341 / DSM 671 / R1).